The sequence spans 107 residues: U1-lycotoxin-Ls1t (107 aa).

The signal sequence occupies residues 1–20 (MMKVLVVVALLVTLISYSSS). Residues 21–41 (EGIDDLEADELLSLMANEQTR) constitute a propeptide that is removed on maturation. 4 disulfides stabilise this stretch: cysteine 44/cysteine 59, cysteine 51/cysteine 68, cysteine 58/cysteine 86, and cysteine 70/cysteine 84.

Belongs to the neurotoxin 19 (CSTX) family. 04 (U1-Lctx) subfamily. Expressed by the venom gland.

The protein resides in the secreted. The sequence is that of U1-lycotoxin-Ls1t from Lycosa singoriensis (Wolf spider).